The following is a 379-amino-acid chain: Protein RecA (379 aa).

Glycine 79–threonine 86 contributes to the ATP binding site.

It belongs to the RecA family.

The protein localises to the cytoplasm. Its function is as follows. Can catalyze the hydrolysis of ATP in the presence of single-stranded DNA, the ATP-dependent uptake of single-stranded DNA by duplex DNA, and the ATP-dependent hybridization of homologous single-stranded DNAs. It interacts with LexA causing its activation and leading to its autocatalytic cleavage. The chain is Protein RecA from Streptococcus thermophilus.